The sequence spans 270 residues: Release factor glutamine methyltransferase (270 aa).

Residues 112-116, Asp-135, Trp-162, and Asn-178 contribute to the S-adenosyl-L-methionine site; that span reads GTGSG. 178–181 serves as a coordination point for substrate; the sequence is NPPY.

This sequence belongs to the protein N5-glutamine methyltransferase family. PrmC subfamily.

It carries out the reaction L-glutaminyl-[peptide chain release factor] + S-adenosyl-L-methionine = N(5)-methyl-L-glutaminyl-[peptide chain release factor] + S-adenosyl-L-homocysteine + H(+). In terms of biological role, methylates the class 1 translation termination release factors RF1/PrfA and RF2/PrfB on the glutamine residue of the universally conserved GGQ motif. The polypeptide is Release factor glutamine methyltransferase (Bordetella pertussis (strain Tohama I / ATCC BAA-589 / NCTC 13251)).